Reading from the N-terminus, the 346-residue chain is Nuclear distribution protein nudE-like 1 (346 aa).

Positions 13-190 form a coiled coil; sequence KEEIVYWREL…LAVRERQTNG (178 aa). 2 disordered regions span residues 184 to 205 and 325 to 346; these read RERQ…DCDK and YDPP…PLSV. A compositionally biased stretch (polar residues) spans 188–200; it reads TNGTRKSAPSSPT. The span at 335-346 shows a compositional bias: pro residues; sequence PPSPPGMLPLSV.

The protein belongs to the nudE family. In terms of processing, phosphorylated in mitosis.

The protein localises to the cytoplasm. It is found in the cytoskeleton. It localises to the microtubule organizing center. The protein resides in the centrosome. Its subcellular location is the spindle. In terms of biological role, required for organization of the cellular microtubule array and microtubule anchoring at the centrosome. Positively regulates the activity of the minus-end directed microtubule motor protein dynein. May enhance dynein-mediated microtubule sliding by targeting dynein to the microtubule plus end. Positively regulates lysosome peripheral distribution and ruffled border formation in osteoclasts. This is Nuclear distribution protein nudE-like 1 (ndel1) from Xenopus tropicalis (Western clawed frog).